Consider the following 507-residue polypeptide: ATP synthase subunit alpha, chloroplastic (507 aa).

170–177 (GDRQTGKT) contributes to the ATP binding site.

This sequence belongs to the ATPase alpha/beta chains family. As to quaternary structure, F-type ATPases have 2 components, CF(1) - the catalytic core - and CF(0) - the membrane proton channel. CF(1) has five subunits: alpha(3), beta(3), gamma(1), delta(1), epsilon(1). CF(0) has four main subunits: a, b, b' and c.

The protein resides in the plastid. It is found in the chloroplast thylakoid membrane. The catalysed reaction is ATP + H2O + 4 H(+)(in) = ADP + phosphate + 5 H(+)(out). Functionally, produces ATP from ADP in the presence of a proton gradient across the membrane. The alpha chain is a regulatory subunit. The polypeptide is ATP synthase subunit alpha, chloroplastic (Solanum bulbocastanum (Wild potato)).